A 412-amino-acid chain; its full sequence is MKIAVETTLFDFFVIDQFKKSTFSAPNTKVDTIKGCINKFIEQFNVYDEQHIFWQPPGKSNVRLLSNANDFGQLGNFLHKKIKCNIFIGEEALRKYDLNICGPYDKFVENSDPSVKKVVNRDDVMLSRKCLNIISEQLSILEKSISKAQNQVLQSSEVEGKKCIILPEDKPELIKFFSKFETSVQLQEVYEGYKVYEKLLQKFGGQKKRMESFLNENTPMSGAEAIKQINISEELKEKGERLTTPNDPLLHVEVSNEDNSLHFILYNKTNIIIPGNCTFEFSSQISEVFSIKMGPHEIGIKGQKELWFFPSLPTPLSNYTMKVVNQDGETILVGKCADSNEITLKSPLASFSTGSFQTGSFHTLQDPTNVFRADALSSPDESSIMSTPFLGETDEVYNSGSTLSRPFTWEEI.

The tract at residues 246–348 is AMS1-binding; sequence NDPLLHVEVS…SNEITLKSPL (103 aa).

As to quaternary structure, interacts with AMS1, ATG8 and ATG11.

The protein localises to the preautophagosomal structure membrane. Its function is as follows. Cargo-receptor protein involved in the cytoplasm to vacuole transport (Cvt) and in autophagy. Recognizes cargo proteins, such as AMS1 and delivers them to the pre-autophagosomal structure for eventual engulfment by the autophagosome and targeting to the vacuole. The polypeptide is Autophagy-related protein 34 (ATG34) (Saccharomyces cerevisiae (strain ATCC 204508 / S288c) (Baker's yeast)).